Here is a 101-residue protein sequence, read N- to C-terminus: Small ribosomal subunit protein uS14 (101 aa).

Belongs to the universal ribosomal protein uS14 family. Part of the 30S ribosomal subunit. Contacts proteins S3 and S10.

Binds 16S rRNA, required for the assembly of 30S particles and may also be responsible for determining the conformation of the 16S rRNA at the A site. This Hyphomonas neptunium (strain ATCC 15444) protein is Small ribosomal subunit protein uS14.